Here is a 612-residue protein sequence, read N- to C-terminus: FAD-linked oxidoreductase notD' (612 aa).

Positions 1–19 are cleaved as a signal peptide; sequence MRDIRELLLVLFTSCLALG. 3 N-linked (GlcNAc...) asparagine glycosylation sites follow: Asn50, Asn86, and Asn109. The region spanning 124 to 307 is the FAD-binding PCMH-type domain; that stretch reads GQGRIPRYSA…TSITMPVFGA (184 aa). 2 N-linked (GlcNAc...) asparagine glycosylation sites follow: Asn311 and Asn396.

This sequence belongs to the oxygen-dependent FAD-linked oxidoreductase family. It depends on FAD as a cofactor.

The protein operates within alkaloid biosynthesis. Functionally, FAD-linked oxidoreductase; part of the gene cluster that mediates the biosynthesis of notoamide, a fungal indole alkaloid that belongs to a family of natural products containing a characteristic bicyclo[2.2.2]diazaoctane core. The first step of notoamide biosynthesis involves coupling of L-proline and L-tryptophan by the bimodular NRPS notE', to produce cyclo-L-tryptophan-L-proline called brevianamide F. The reverse prenyltransferase notF' then acts as a deoxybrevianamide E synthase and converts brevianamide F to deoxybrevianamide E via reverse prenylation at C-2 of the indole ring leading to the bicyclo[2.2.2]diazaoctane core. Deoxybrevianamide E is further hydroxylated at C-6 of the indole ring, likely catalyzed by the cytochrome P450 monooxygenase notG', to yield 6-hydroxy-deoxybrevianamide E. 6-hydroxy-deoxybrevianamide E is a specific substrate of the prenyltransferase notC' for normal prenylation at C-7 to produce 6-hydroxy-7-prenyl-deoxybrevianamide, also called notoamide S. As the proposed pivotal branching point in notoamide biosynthesis, notoamide S can be diverted to notoamide E through an oxidative pyran ring closure putatively catalyzed by either notH' cytochrome P450 monooxygenase or the notD' FAD-linked oxidoreductase. This step would be followed by an indole 2,3-epoxidation-initiated pinacol-like rearrangement catalyzed by the notB' FAD-dependent monooxygenase leading to the formation of notoamide C and notoamide D. On the other hand notoamide S is converted to notoamide T by notH' (or notD'), a bifunctional oxidase that also functions as the intramolecular Diels-Alderase responsible for generation of (-)-notoamide T. To generate antipodal (+)-notoaminide T, notH (or notD) in Aspergillus strain MF297-2 is expected to catalyze a Diels-Alder reaction leading to the opposite stereochemistry. The remaining oxidoreductase notD' (or notH') likely catalyzes the oxidative pyran ring formation to yield (-)-stephacidin A. The FAD-dependent monooxygenase notI' is highly similar to notB' and is predicted to catalyze a similar conversion from (-)-stephacidin A to (+)-notoamide B via the 2,3-epoxidation of (-)-stephacidin A followed by a pinacol-type rearrangement. Finally, it remains unclear which enzyme could be responsible for the final hydroxylation steps leading to notoamide A and sclerotiamide. This is FAD-linked oxidoreductase notD' from Aspergillus versicolor.